A 1207-amino-acid polypeptide reads, in one-letter code: Glycerotoxin paralog 1 (1207 aa).

In terms of domain architecture, EGF-like spans 79–120 (DLNECNRNNGGCTNGKCINTEGSYHCDCDRGYLATSSRTKCE). Cystine bridges form between cysteine 83–cysteine 95, cysteine 90–cysteine 104, cysteine 106–cysteine 119, cysteine 124–cysteine 167, and cysteine 151–cysteine 185. The Sushi domain occupies 122–187 (VECEPLTLAN…WSGTSPTCQN (66 aa)). 2 WSC domains span residues 300 to 391 (VGTS…YRDR) and 392 to 476 (SLGF…NDQG). Asparagine 745 carries N-linked (GlcNAc...) asparagine glycosylation.

As to quaternary structure, dimer; probably disulfide-linked. Interacts with Cav2.2/CACNA1B calcium channel. In terms of tissue distribution, expressed exclusively in the four pharyngeal lobes and in tissue located at the base of the teeth. No distinct expression is visible in the putative venom glands or elsewhere in the pharynx.

The protein localises to the secreted. Functionally, potent venom presynaptic neurotoxin that promotes a long-lasting increase in spontaneous neurotransmitter release at the peripheral and central synapses by selective activation of Cav2.2/CACNA1B (N-type) channels. In addition, it drastically enhances synaptic-vesicle recycling, an effect that is prevented by the Cav2.2-specific inhibitor conotoxin-MVIIA. It activates Cav2.2/CACNA1B by shifting the current-voltage relationship of channels towards more hyperpolarized potentiels in a reversible manner. May have two separate sites of action on Cav2.2: one high affinity linked to changes in gating properties, and a second low affinity that results in block of current activity. This chain is Glycerotoxin paralog 1, found in Glycera tridactyla (Glycerine worm).